The sequence spans 413 residues: uncharacterized protein (413 aa).

This is an uncharacterized protein from Bacillus subtilis (strain 168).